A 276-amino-acid chain; its full sequence is MDAEIFSLDSLSIYKDINIASAKPSLKERKNIKHYALDYLSIDEKNNAPLFKTLLEDAMRVSSKEVLLIVGGSSFYLKSILEGLSDTPKISGEEAVKIEQEINSLANPYAFLKSIDPTSAFKIHPNDTYRIHKALEIFYSTHTPPSEYFKTNPKKPFEHAISLFALSIEKSALANNIKQRTKNMLDCGLIEEIKALYAQYPKDSQPFKAIGVKESILFLEKQLTLKKLEEAIISNTIQLAKRQNTFNKTQFNNLYTGSVGEVRHAILNHSKSAIKG.

The segment at 9–12 is interaction with substrate tRNA; the sequence is DSLS.

It belongs to the IPP transferase family. Monomer. The cofactor is Mg(2+).

It catalyses the reaction adenosine(37) in tRNA + dimethylallyl diphosphate = N(6)-dimethylallyladenosine(37) in tRNA + diphosphate. Functionally, catalyzes the transfer of a dimethylallyl group onto the adenine at position 37 in tRNAs that read codons beginning with uridine, leading to the formation of N6-(dimethylallyl)adenosine (i(6)A). In Helicobacter pylori (strain Shi470), this protein is tRNA dimethylallyltransferase (miaA).